Here is a 357-residue protein sequence, read N- to C-terminus: tRNA/tmRNA (uracil-C(5))-methyltransferase (357 aa).

S-adenosyl-L-methionine contacts are provided by glutamine 180, tyrosine 209, asparagine 214, glutamate 230, and aspartate 290. Cysteine 315 serves as the catalytic Nucleophile. Glutamate 349 serves as the catalytic Proton acceptor.

The protein belongs to the class I-like SAM-binding methyltransferase superfamily. RNA M5U methyltransferase family. TrmA subfamily.

It catalyses the reaction uridine(54) in tRNA + S-adenosyl-L-methionine = 5-methyluridine(54) in tRNA + S-adenosyl-L-homocysteine + H(+). It carries out the reaction uridine(341) in tmRNA + S-adenosyl-L-methionine = 5-methyluridine(341) in tmRNA + S-adenosyl-L-homocysteine + H(+). Its function is as follows. Dual-specificity methyltransferase that catalyzes the formation of 5-methyluridine at position 54 (m5U54) in all tRNAs, and that of position 341 (m5U341) in tmRNA (transfer-mRNA). This Campylobacter jejuni subsp. jejuni serotype O:23/36 (strain 81-176) protein is tRNA/tmRNA (uracil-C(5))-methyltransferase.